Reading from the N-terminus, the 447-residue chain is Argininosuccinate synthase (447 aa).

ATP-binding positions include 17–25 (AFSGGLDTS) and alanine 43. Tyrosine 99 provides a ligand contact to L-citrulline. 2 residues coordinate ATP: glycine 129 and threonine 131. 3 residues coordinate L-aspartate: threonine 131, asparagine 135, and aspartate 136. Asparagine 135 contacts L-citrulline. Aspartate 136 is a binding site for ATP. 2 residues coordinate L-citrulline: arginine 139 and serine 192. Aspartate 194 serves as a coordination point for ATP. Residues threonine 201, glutamate 203, and glutamate 280 each coordinate L-citrulline.

It belongs to the argininosuccinate synthase family. Type 2 subfamily. As to quaternary structure, homotetramer.

The protein resides in the cytoplasm. It carries out the reaction L-citrulline + L-aspartate + ATP = 2-(N(omega)-L-arginino)succinate + AMP + diphosphate + H(+). It functions in the pathway amino-acid biosynthesis; L-arginine biosynthesis; L-arginine from L-ornithine and carbamoyl phosphate: step 2/3. The chain is Argininosuccinate synthase from Escherichia fergusonii (strain ATCC 35469 / DSM 13698 / CCUG 18766 / IAM 14443 / JCM 21226 / LMG 7866 / NBRC 102419 / NCTC 12128 / CDC 0568-73).